Reading from the N-terminus, the 476-residue chain is Angiotensinogen (476 aa).

The first 24 residues, 1–24 (MAPAGLSLGAAILCLLAWAGLAAG), serve as a signal peptide directing secretion. A disulfide bridge connects residues Cys-42 and Cys-161. Residues Asn-295, Asn-319, Asn-362, and Asn-401 are each glycosylated (N-linked (GlcNAc...) asparagine).

Belongs to the serpin family. In response to low blood pressure, the enzyme renin/REN cleaves angiotensinogen to produce angiotensin-1. Angiotensin-1 is a substrate of ACE (angiotensin converting enzyme) that removes a dipeptide to yield the physiologically active peptide angiotensin-2. Angiotensin-1 and angiotensin-2 can be further processed to generate angiotensin-3, angiotensin-4. Angiotensin 1-9 is cleaved from angiotensin-1 by ACE2 and can be further processed by ACE to produce angiotensin 1-7, angiotensin 1-5 and angiotensin 1-4. Angiotensin 1-7 has also been proposed to be cleaved from angiotensin-2 by ACE2 or from angiotensin-1 by MME (neprilysin). Post-translationally, the disulfide bond is labile. Angiotensinogen is present in the circulation in a near 40:60 ratio with the oxidized disulfide-bonded form, which preferentially interacts with receptor-bound renin.

The protein resides in the secreted. Functionally, essential component of the renin-angiotensin system (RAS), a potent regulator of blood pressure, body fluid and electrolyte homeostasis. Its function is as follows. Acts directly on vascular smooth muscle as a potent vasoconstrictor, affects cardiac contractility and heart rate through its action on the sympathetic nervous system, and alters renal sodium and water absorption through its ability to stimulate the zona glomerulosa cells of the adrenal cortex to synthesize and secrete aldosterone. Acts by binding to angiotensin receptors AGTR1 and AGTR2. Also binds the DEAR/FBXW7-AS1 receptor. Stimulates aldosterone release. In terms of biological role, is a ligand for the G-protein coupled receptor MAS1. Has vasodilator and antidiuretic effects. Has an antithrombotic effect that involves MAS1-mediated release of nitric oxide from platelets. The chain is Angiotensinogen (AGT) from Bos taurus (Bovine).